Here is a 407-residue protein sequence, read N- to C-terminus: Nicotinate phosphoribosyltransferase (407 aa).

Phosphohistidine; by autocatalysis is present on His224.

This sequence belongs to the NAPRTase family. Post-translationally, transiently phosphorylated on a His residue during the reaction cycle. Phosphorylation strongly increases the affinity for substrates and increases the rate of nicotinate D-ribonucleotide production. Dephosphorylation regenerates the low-affinity form of the enzyme, leading to product release.

It carries out the reaction nicotinate + 5-phospho-alpha-D-ribose 1-diphosphate + ATP + H2O = nicotinate beta-D-ribonucleotide + ADP + phosphate + diphosphate. It participates in cofactor biosynthesis; NAD(+) biosynthesis; nicotinate D-ribonucleotide from nicotinate: step 1/1. In terms of biological role, catalyzes the synthesis of beta-nicotinate D-ribonucleotide from nicotinate and 5-phospho-D-ribose 1-phosphate at the expense of ATP. The chain is Nicotinate phosphoribosyltransferase from Pseudomonas syringae pv. tomato (strain ATCC BAA-871 / DC3000).